The primary structure comprises 444 residues: MANVVVIGAQWGDEGKGKITDLLSRSADVVVRYQGGVNAGHTVVVGEQTLKLHLIPSGILYPDTQCIIGSGTVIDPKVLLGEVEMLEQLGISTDHLLISQTAHVTMPYHRLIDQASEQQRGSHKIGTTGRGIGPTYADKSERTGIRILDLMDPEGLREQLTWTIAQKNVILDKLYGLPPLDAESVIEEYSGYAERLRPHVVDSSLTIDEAWRKRKNILFEGAQGTLLDLDHGTYPYVTSSNPVAGGACIGAGVGPTIIDRVIGVAKAYTTRVGEGPFPTELHGDIGELLCQRGAEFGTTTGRRRRCGWFDAVIGRYAVRINGIDCLAITKLDVLDDLDEIQVCVAYDIDGERCDHFPSSARSFANCQPIYKTVPGWKQSTSHCRNLEDLPKAALDYLKFLAELMEVPIAIVSLGASRDQTIIVEDPIHGPKRALLHTNGDSSAS.

GTP-binding positions include 12-18 and 40-42; these read GDEGKGK and GHT. The Proton acceptor role is filled by Asp13. Mg(2+)-binding residues include Asp13 and Gly40. Residues 13-16, 38-41, Thr128, Arg142, Gln223, Thr238, and Arg302 contribute to the IMP site; these read DEGK and NAGH. His41 acts as the Proton donor in catalysis. Position 298 to 304 (298 to 304) interacts with substrate; that stretch reads TTTGRRR. GTP-binding positions include Arg304, 330–332, and 412–414; these read KLD and SLG.

It belongs to the adenylosuccinate synthetase family. In terms of assembly, homodimer. Mg(2+) serves as cofactor.

The protein resides in the cytoplasm. The catalysed reaction is IMP + L-aspartate + GTP = N(6)-(1,2-dicarboxyethyl)-AMP + GDP + phosphate + 2 H(+). It participates in purine metabolism; AMP biosynthesis via de novo pathway; AMP from IMP: step 1/2. Its function is as follows. Plays an important role in the de novo pathway of purine nucleotide biosynthesis. Catalyzes the first committed step in the biosynthesis of AMP from IMP. The protein is Adenylosuccinate synthetase of Synechococcus sp. (strain ATCC 27144 / PCC 6301 / SAUG 1402/1) (Anacystis nidulans).